The primary structure comprises 299 residues: Small ribosomal subunit protein uS2 (299 aa).

Residues 259-291 are compositionally biased toward low complexity; sequence AAASAAGPTSWEADGADWAASSAPAAAGESWAE. The tract at residues 259–299 is disordered; the sequence is AAASAAGPTSWEADGADWAASSAPAAAGESWAETQPAEGKW.

It belongs to the universal ribosomal protein uS2 family. Component of the small ribosomal subunit. Mature ribosomes consist of a small (40S) and a large (60S) subunit. The 40S subunit contains about 33 different proteins and 1 molecule of RNA (18S). The 60S subunit contains about 49 different proteins and 3 molecules of RNA (25S, 5.8S and 5S). Interacts with rps21.

It is found in the cytoplasm. Required for the assembly and/or stability of the 40S ribosomal subunit. Required for the processing of the 20S rRNA-precursor to mature 18S rRNA in a late step of the maturation of 40S ribosomal subunits. The protein is Small ribosomal subunit protein uS2 (rps0) of Aspergillus flavus (strain ATCC 200026 / FGSC A1120 / IAM 13836 / NRRL 3357 / JCM 12722 / SRRC 167).